The sequence spans 1745 residues: Tight junction protein 1 (1745 aa).

The region spanning 23-110 is the PDZ 1 domain; sequence TVTLHRAPGF…NAKITIRRKK (88 aa). Basic residues predominate over residues 102 to 112; sequence AKITIRRKKKV. The segment at 102–189 is disordered; that stretch reads AKITIRRKKK…QPAKPTKVTL (88 aa). The span at 123 to 136 shows a compositional bias: acidic residues; that stretch reads PVSDNEDDSYDEEV. Position 125 is a phosphoserine (Ser-125). Position 132 is a phosphotyrosine (Tyr-132). The span at 149 to 175 shows a compositional bias: basic and acidic residues; the sequence is RRSEKSWARDRSASRERSLSPRSDRRS. A phosphoserine mark is found at Ser-175, Ser-178, and Ser-179. Thr-185 is modified (phosphothreonine). The region spanning 186–264 is the PDZ 2 domain; it reads KVTLVKSRKN…KLKMVVQRDE (79 aa). Ser-212 and Ser-241 each carry phosphoserine. A Phosphothreonine modification is found at Thr-267. Phosphoserine is present on residues Ser-275, Ser-277, Ser-280, Ser-284, Ser-290, Ser-294, Ser-297, Ser-300, Ser-323, Ser-329, Ser-334, Ser-337, and Ser-353. The segment at 296-364 is disordered; sequence ASDHSGRSHD…PVKHVDDHPP (69 aa). Basic and acidic residues predominate over residues 299–308; the sequence is HSGRSHDRPP. Polar residues predominate over residues 325–338; it reads HSTQSPQQPSNGSL. Thr-354 is subject to Phosphothreonine. The PDZ 3 domain occupies 421 to 502; that stretch reads SMKLVKFRKG…GEEVTILAQK (82 aa). One can recognise an SH3 domain in the interval 516 to 584; sequence GDSFYIRTHF…PNKNRAEQLA (69 aa). One can recognise a Guanylate kinase-like domain in the interval 610–791; that stretch reads SKRNLRKSRE…WYGALKEAIQ (182 aa). Phosphoserine is present on residues Ser-617 and Ser-622. The interval 633 to 876 is occludin (OCLN)-binding region; that stretch reads YERVVLREAG…GTPPESAITR (244 aa). The residue at position 809 (Thr-809) is a Phosphothreonine. Phosphoserine occurs at positions 810 and 821. Tyr-822 bears the Phosphotyrosine mark. 3 positions are modified to phosphoserine: Ser-824, Ser-828, and Ser-837. 2 disordered regions span residues 825 to 944 and 956 to 1042; these read APGS…SASA and LEEP…YEPQ. Phosphothreonine is present on residues Thr-846, Thr-848, Thr-854, Thr-861, and Thr-868. The segment covering 879-892 has biased composition (basic and acidic residues); that stretch reads EPVREDSSGMHHEN. Low complexity predominate over residues 893–906; sequence QTYPPYSPQAQPQA. Position 912 is a phosphoserine (Ser-912). The segment covering 998–1014 has biased composition (basic and acidic residues); the sequence is DPAKVYRKEPYSEEMMR. A Phosphoserine modification is found at Ser-1071. The segment at 1090 to 1586 is disordered; that stretch reads QWSYYDDKQP…STQPPEFDSG (497 aa). The span at 1106–1124 shows a compositional bias: basic and acidic residues; sequence ENQHPRDLDSRQHPEEASE. Ser-1138 is modified (phosphoserine). A phosphotyrosine mark is found at Tyr-1139 and Tyr-1164. Residues 1150–1370 form an actin-binding region (ABR) region; that stretch reads RTSTLRHEEQ…FDRRSFESKP (221 aa). Composition is skewed to basic and acidic residues over residues 1268 to 1285 and 1335 to 1346; these read KMFE…KDVN and PPEDIVRSNHYD. Tyr-1353 is subject to Phosphotyrosine. Ser-1365 bears the Phosphoserine mark. The segment covering 1388-1399 has biased composition (low complexity); the sequence is SQSQPNFSSYSS. The span at 1401-1418 shows a compositional bias: basic and acidic residues; it reads GKPETDAVDRSFSEKRYD. Residue Ser-1411 is modified to Phosphoserine. Over residues 1431–1445 the composition is skewed to low complexity; that stretch reads SQYSQPAPPLSSSSL. 2 stretches are compositionally biased toward polar residues: residues 1455–1468 and 1510–1519; these read EGNS…NSYM and AEQTQKTITP. A compositionally biased stretch (basic and acidic residues) spans 1535 to 1544; the sequence is PFERKFESPK. Ser-1542 is modified (phosphoserine). A compositionally biased stretch (polar residues) spans 1561 to 1580; it reads SSKTPTSPKTLMKAHSSTQP. A Phosphoserine modification is found at Ser-1614. The ZU5 domain maps to 1631-1745; sequence ATARGIFNSN…NCVSVLIDHF (115 aa).

This sequence belongs to the MAGUK family. In terms of assembly, homodimer. Forms heterodimers TJP3. Forms a heterodimer (via PDZ2 domain) with TJP2/ZO2 (via PDZ2 domain). Interacts with OCLN, CALM, claudins, CGN/cingulin, CXADR, GJD3 and UBN1. Interacts (via ZU5 domain) with CDC42BPB. Interacts (via PDZ domain) with GJA1. Interacts (via PDZ domains) with ANKRD2. Interacts with POPDC1 (via the C-terminus cytoplasmic tail). Interacts with GJA12 and KIRREL1. Interacts with HSPA4. Interacts (via ZU5 domain) with MYZAP. Interacts with DLL1. Interacts with USP53 (via the C-terminal region). Interacts with DNMBP (via C-terminal domain); required for the apical cell-cell junction localization of DNMBP. Interacts with SPEF1. Interacts (via N-terminus) with CTNNA1. Interacts with CLDN18. Interacts with CLDN16 (via TRV motif); this is a prerequisite for anchoring of CLDN16 at the tight junction. Interacts with PKP1; the interaction facilitates TJP1/ZO-1 localization to the plasma membrane. Interacts with PATJ (via PDZ1-6 domains); the interaction is required for attachment and extension of TJP1/ZO1 condensates along the apical cell interface. In terms of processing, phosphorylated at tyrosine redidues in response to epidermal growth factor (EGF). This response is dependent on an intact actin microfilament system. Dephosphorylated by PTPRJ. In terms of tissue distribution, expressed between ameloblasts, at ameloblast-ameloblast junctions and in the stratum intermedium during pre-secretory and secretory stages of tooth development (at protein level).

The protein localises to the cell membrane. Its subcellular location is the cell junction. The protein resides in the tight junction. It is found in the gap junction. It localises to the cytoplasm. The protein localises to the myofibril. Its subcellular location is the sarcomere. The protein resides in the i band. Tjp1, TjpP2, and Tjp3 are closely related scaffolding proteins that link tight junction (TJ) transmembrane proteins such as claudins, junctional adhesion molecules, and occludin to the actin cytoskeleton. Forms a multistranded TJP1/ZO1 condensate which elongates to form a tight junction belt, the belt is anchored at the apical cell membrane via interaction with PATJ. The tight junction acts to limit movement of substances through the paracellular space and as a boundary between the compositionally distinct apical and basolateral plasma membrane domains of epithelial and endothelial cells. Necessary for lumenogenesis, and particularly efficient epithelial polarization and barrier formation. Plays a role in the regulation of cell migration by targeting Cdc42bpb to the leading edge of migrating cells. Plays an important role in podosome formation and associated function, thus regulating cell adhesion and matrix remodeling. With Tjp2 and TJjp3, participates in the junctional retention and stability of the transcription factor Dbpa, but is not involved in its shuttling to the nucleus. May play a role in mediating cell morphology changes during ameloblast differentiation via its role in tight junctions. This chain is Tight junction protein 1, found in Mus musculus (Mouse).